Consider the following 62-residue polypeptide: Photosystem II reaction center protein Z (62 aa).

Transmembrane regions (helical) follow at residues 8–28 (AVFALIAISFLLVIGVPVVLA) and 41–61 (FSGASLWIGLVFLVGILNSFI).

It belongs to the PsbZ family. In terms of assembly, PSII is composed of 1 copy each of membrane proteins PsbA, PsbB, PsbC, PsbD, PsbE, PsbF, PsbH, PsbI, PsbJ, PsbK, PsbL, PsbM, PsbT, PsbY, PsbZ, Psb30/Ycf12, at least 3 peripheral proteins of the oxygen-evolving complex and a large number of cofactors. It forms dimeric complexes.

It localises to the plastid. Its subcellular location is the chloroplast thylakoid membrane. In terms of biological role, may control the interaction of photosystem II (PSII) cores with the light-harvesting antenna, regulates electron flow through the 2 photosystem reaction centers. PSII is a light-driven water plastoquinone oxidoreductase, using light energy to abstract electrons from H(2)O, generating a proton gradient subsequently used for ATP formation. This Marchantia polymorpha (Common liverwort) protein is Photosystem II reaction center protein Z.